We begin with the raw amino-acid sequence, 161 residues long: MSIVTKSIVNADAEARYLSPGELDRIKAFVTGGAARLRIAETLTGSRETIVKQAGDRLFQKRPDIVSPGGNAYGEEMTATCLRDMDYYLRLVTYGVVSGDVTPIEEIGLVGVREMYRSLGTPIEAVAQSVREMKEVASGLMSSDDAAEASAYFDFVIGKMS.

At N71 the chain carries N4-methylasparagine. C81 serves as a coordination point for (2R,3E)-phycocyanobilin.

This sequence belongs to the phycobiliprotein family. As to quaternary structure, heterodimer of an alpha and a beta chain. In terms of processing, contains one covalently linked phycocyanobilin chromophore.

The protein resides in the cellular thylakoid membrane. Light-harvesting photosynthetic bile pigment-protein from the phycobiliprotein complex. Allophycocyanin has a maximum absorption at approximately 650 nanometers. This chain is Allophycocyanin alpha chain (apcA), found in Synechocystis sp. (strain ATCC 27184 / PCC 6803 / Kazusa).